A 99-amino-acid polypeptide reads, in one-letter code: U1-theraphotoxin-Tal1a (99 aa).

Positions 1–22 (MNTIQVIIFAVVLVLTVTVGQA) are cleaved as a signal peptide. A propeptide spanning residues 23-57 (DEDSAETSLLRKLKEAEASLFGQHLEESQHSREKR) is cleaved from the precursor. 3 disulfide bridges follow: cysteine 58-cysteine 73, cysteine 65-cysteine 78, and cysteine 72-cysteine 93. Serine 98 carries the post-translational modification Serine amide.

The protein belongs to the neurotoxin 14 (magi-1) family. 08 (Ltx-4) subfamily. As to expression, expressed by the venom gland.

The protein resides in the secreted. Functionally, insecticidal toxin that shows strong lethal effects on American cockroaches (P.americana) and common mealbeetle (T.molitor). Possibly acts by blocking ion channel currents. Also shows significant analgesic effects in mice models of pain including abdominal writhing induced by acetic acid and formalin-induced paw licking tests. In addition, exerts marked inhibition of proliferation of some human tumor cell lines including C8166, Molt-4, A-549, BIU-87, T24, and Calu-6. The sequence is that of U1-theraphotoxin-Tal1a from Tliltocatl albopilosus (Curlyhair tarantula).